A 438-amino-acid polypeptide reads, in one-letter code: Putative metabolite transport protein HI_0281 (438 aa).

Over 1 to 17 (MSTQLRNNPMKVALASM) the chain is Cytoplasmic. The chain crosses the membrane as a helical span at residues 18–38 (VGTAIEFFDYYIYAAAAVLVF). The Periplasmic portion of the chain corresponds to 39-52 (NTQFFHSDDPLSND). A helical membrane pass occupies residues 53–73 (LLSLSTLALAFFARPIGSALF). The Cytoplasmic segment spans residues 74 to 85 (GHFGDKIGRKKT). The chain crosses the membrane as a helical span at residues 86 to 106 (LVASLVLMGGSTVVIGLLPNY). The Periplasmic portion of the chain corresponds to 107–115 (AQIGIWAPI). The chain crosses the membrane as a helical span at residues 116 to 136 (LLCVCRVGQGIGLGGEWGGAA). Residues 137 to 156 (LVATENAPEGKRAWYGTFPQ) lie on the Cytoplasmic side of the membrane. A helical membrane pass occupies residues 157 to 177 (LGAPIGLFVANGTFFLVSYLL). Over 178–181 (GHNA) the chain is Periplasmic. Residues 182–202 (LVEWAWRIPFVSSILLVAVGL) form a helical membrane-spanning segment. Topologically, residues 203–239 (YVRLTLHESHVFVEAEQKGKKLNAPVSVVFTKHLKPM) are cytoplasmic. The helical transmembrane segment at 240 to 260 (VIGTFIMVATYSLFYIMTAFA) threads the bilayer. The Periplasmic portion of the chain corresponds to 261–286 (QAYSRTAPKLSEAGYALGLGIPANTF). The helical transmembrane segment at 287-307 (TGLLLISAIVFGIFISISGFY) threads the bilayer. Residues 308-314 (ADKIGRR) lie on the Cytoplasmic side of the membrane. Residues 315 to 336 (KWLIWVTIAIGVLGLAMPLFLE) form a helical membrane-spanning segment. Residues 337–342 (NGTPVS) lie on the Periplasmic side of the membrane. The helical transmembrane segment at 343-363 (VFAFLVIGMAIMGMTFGPMAA) threads the bilayer. Over 364 to 377 (LLPELFPTEVRYSG) the chain is Cytoplasmic. The helical transmembrane segment at 378–398 (ASLAYNLASIIGATIAAMISL) threads the bilayer. At 399–405 (KINASFG) the chain is on the periplasmic side. Residues 406 to 426 (VMGVGIYLAINALMTFLALLA) form a helical membrane-spanning segment. At 427–438 (SKETKNVDLTEI) the chain is on the cytoplasmic side.

It belongs to the major facilitator superfamily. Sugar transporter (TC 2.A.1.1) family.

The protein localises to the cell inner membrane. The protein is Putative metabolite transport protein HI_0281 of Haemophilus influenzae (strain ATCC 51907 / DSM 11121 / KW20 / Rd).